A 276-amino-acid chain; its full sequence is Putative metal-binding protein TC_0696 (276 aa).

The first 18 residues, 1-18 (MRLLILLLFSFGIIYSHG), serve as a signal peptide directing secretion. A divalent metal cation-binding residues include His-59, His-121, His-185, and Asp-256.

Belongs to the bacterial solute-binding protein 9 family.

Its subcellular location is the periplasm. Part of an ATP-binding cassette (ABC) transport system involved in metal import. Binds a metal with high affinity and specificity and delivers it to the membrane permease for translocation into the cytoplasm. The chain is Putative metal-binding protein TC_0696 from Chlamydia muridarum (strain MoPn / Nigg).